The chain runs to 305 residues: Transcription factor MYB87 (305 aa).

2 consecutive HTH myb-type domains span residues 9-66 (KMAV…RPNL) and 67-117 (KHGG…KKKL). 2 consecutive DNA-binding regions (H-T-H motif) follow at residues 38 to 62 (WISLPQRIGIKRCGKSCRLRWLNYL) and 90 to 113 (WSIIASQLPGRTDNDIKNYWNTRL).

In terms of tissue distribution, expressed in roots, leaves, internodes, shoot tips and flowers.

The protein resides in the nucleus. Transcription factor that functions as a regulator of genes affecting cell wall organization and remodeling. Activates genes related to the primary cell wall and represses genes related to the secondary cell wall and expansins. Required for the regulation of longitudinal cell growth in stems, leaves, petioles, roots, flowers and siliques. This chain is Transcription factor MYB87, found in Arabidopsis thaliana (Mouse-ear cress).